Here is a 122-residue protein sequence, read N- to C-terminus: Fluoride-specific ion channel FluC (122 aa).

4 consecutive transmembrane segments (helical) span residues 1-21 (MYAF…RHYL), 35-55 (WAIL…SAYL), 67-87 (FLLT…LNLI), and 98-118 (FLNL…GFWL). Residues G74 and T77 each coordinate Na(+).

It belongs to the fluoride channel Fluc/FEX (TC 1.A.43) family.

It is found in the cell inner membrane. The enzyme catalyses fluoride(in) = fluoride(out). Na(+) is not transported, but it plays an essential structural role and its presence is essential for fluoride channel function. Fluoride-specific ion channel. Important for reducing fluoride concentration in the cell, thus reducing its toxicity. The protein is Fluoride-specific ion channel FluC of Dichelobacter nodosus (strain VCS1703A).